The sequence spans 119 residues: Ribosome-binding factor A (119 aa).

This sequence belongs to the RbfA family. As to quaternary structure, monomer. Binds 30S ribosomal subunits, but not 50S ribosomal subunits or 70S ribosomes.

Its subcellular location is the cytoplasm. Its function is as follows. One of several proteins that assist in the late maturation steps of the functional core of the 30S ribosomal subunit. Associates with free 30S ribosomal subunits (but not with 30S subunits that are part of 70S ribosomes or polysomes). Required for efficient processing of 16S rRNA. May interact with the 5'-terminal helix region of 16S rRNA. The chain is Ribosome-binding factor A from Limosilactobacillus reuteri (strain DSM 20016) (Lactobacillus reuteri).